Reading from the N-terminus, the 255-residue chain is 4-hydroxy-tetrahydrodipicolinate reductase (255 aa).

NAD(+) contacts are provided by residues 8–13 (GSTGRM), 88–90 (ATT), and 112–115 (SSNM). Catalysis depends on H144, which acts as the Proton donor/acceptor. H145 serves as a coordination point for (S)-2,3,4,5-tetrahydrodipicolinate. K148 serves as the catalytic Proton donor. Position 154-155 (154-155 (GT)) interacts with (S)-2,3,4,5-tetrahydrodipicolinate.

The protein belongs to the DapB family.

The protein resides in the cytoplasm. It carries out the reaction (S)-2,3,4,5-tetrahydrodipicolinate + NAD(+) + H2O = (2S,4S)-4-hydroxy-2,3,4,5-tetrahydrodipicolinate + NADH + H(+). The catalysed reaction is (S)-2,3,4,5-tetrahydrodipicolinate + NADP(+) + H2O = (2S,4S)-4-hydroxy-2,3,4,5-tetrahydrodipicolinate + NADPH + H(+). It functions in the pathway amino-acid biosynthesis; L-lysine biosynthesis via DAP pathway; (S)-tetrahydrodipicolinate from L-aspartate: step 4/4. Catalyzes the conversion of 4-hydroxy-tetrahydrodipicolinate (HTPA) to tetrahydrodipicolinate. This Sulfurovum sp. (strain NBC37-1) protein is 4-hydroxy-tetrahydrodipicolinate reductase.